The chain runs to 239 residues: Ribosomal RNA small subunit methyltransferase G (239 aa).

Residues Gly-78, Phe-83, 129–130, and Arg-148 each bind S-adenosyl-L-methionine; that span reads AE.

The protein belongs to the methyltransferase superfamily. RNA methyltransferase RsmG family.

The protein localises to the cytoplasm. In terms of biological role, specifically methylates the N7 position of a guanine in 16S rRNA. The sequence is that of Ribosomal RNA small subunit methyltransferase G from Clostridium botulinum (strain Alaska E43 / Type E3).